Consider the following 564-residue polypeptide: 4-coumarate--CoA ligase 1 (564 aa).

ATP is bound by residues Ser209, Ser210, Gly211, Thr212, Thr213, and Lys217. 2 residues coordinate (E)-4-coumaroyl-AMP: Tyr259 and Thr263. Arg280 contacts CoA. The tract at residues 282–351 is SBD1; sequence DLAAMMDLVE…AKLPGAVLGQ (70 aa). Residues Ala329, Gln351, Gly352, Thr356, and Met364 each coordinate (E)-4-coumaroyl-AMP. The ATP site is built by Gln351, Gly352, and Thr356. The interval 352-419 is SBD2; that stretch reads GYGMTEAGPV…IRGQQIMKGY (68 aa). ATP contacts are provided by Asp440 and Arg455. 2 residues coordinate (E)-4-coumaroyl-AMP: Lys457 and Lys461. Positions 463 and 464 each coordinate CoA. Lys547 is a binding site for ATP.

The protein belongs to the ATP-dependent AMP-binding enzyme family. Requires Mg(2+) as cofactor. As to expression, expressed in roots, stems, leaf blades and leaf sheaths.

It catalyses the reaction (E)-ferulate + ATP + CoA = (E)-feruloyl-CoA + AMP + diphosphate. The enzyme catalyses (E)-4-coumarate + ATP + CoA = (E)-4-coumaroyl-CoA + AMP + diphosphate. The catalysed reaction is (E)-cinnamate + ATP + CoA = (E)-cinnamoyl-CoA + AMP + diphosphate. It carries out the reaction (E)-caffeate + ATP + CoA = (E)-caffeoyl-CoA + AMP + diphosphate. It catalyses the reaction (E)-ferulate + ATP + H(+) = (E)-feruloyl-AMP + diphosphate. The enzyme catalyses (E)-feruloyl-AMP + CoA = (E)-feruloyl-CoA + AMP + H(+). The catalysed reaction is (E)-4-coumarate + ATP + H(+) = (E)-4-coumaroyl-AMP + diphosphate. It carries out the reaction (E)-4-coumaroyl-AMP + CoA = (E)-4-coumaroyl-CoA + AMP + H(+). It catalyses the reaction (E)-caffeate + ATP + H(+) = (E)-caffeoyl-AMP + diphosphate. The enzyme catalyses (E)-caffeoyl-AMP + CoA = (E)-caffeoyl-CoA + AMP + H(+). It functions in the pathway phytoalexin biosynthesis; 3,4',5-trihydroxystilbene biosynthesis; 3,4',5-trihydroxystilbene from trans-4-coumarate: step 1/2. Functionally, involved in the phenylpropanoid metabolism by mediating the activation of a number of hydroxycinnamates for the biosynthesis of monolignols and other phenolic secondary metabolites. Catalyzes the formation of CoA esters of cinnamate, 4-coumarate, caffeate and ferulate. Is more efficient with substrates in the following order: ferulate &gt; 4-coumarate &gt; cinnamate &gt; caffeate. Cannot convert sinapate to its corresponding CoA ester. Follows a two-step reaction mechanism, wherein the carboxylate substrate first undergoes adenylation by ATP, followed by a thioesterification in the presence of CoA to yield the final CoA thioester. This chain is 4-coumarate--CoA ligase 1, found in Oryza sativa subsp. japonica (Rice).